Here is a 118-residue protein sequence, read N- to C-terminus: Large ribosomal subunit protein bL20 (118 aa).

This sequence belongs to the bacterial ribosomal protein bL20 family.

In terms of biological role, binds directly to 23S ribosomal RNA and is necessary for the in vitro assembly process of the 50S ribosomal subunit. It is not involved in the protein synthesizing functions of that subunit. This is Large ribosomal subunit protein bL20 from Leptothrix cholodnii (strain ATCC 51168 / LMG 8142 / SP-6) (Leptothrix discophora (strain SP-6)).